Here is a 1114-residue protein sequence, read N- to C-terminus: Filamentous growth regulator 23 (1114 aa).

The first 21 residues, 1–21, serve as a signal peptide directing secretion; that stretch reads MFASYLLLVLWIIRLVPTTHA. Disordered regions lie at residues 232–256 and 284–314; these read GSET…PSTT and SSSI…TSSS. A compositionally biased stretch (pro residues) spans 240 to 252; sequence TTAPKPVETPSPE. 11 N-linked (GlcNAc...) asparagine glycosylation sites follow: N382, N397, N475, N490, N506, N539, N565, N591, N637, N687, and N739. Residues 392 to 430 are disordered; sequence SETTTNESSSYTDEPSSSEEITNTYEPSSSTESSTTDQF. The tract at residues 764–784 is disordered; the sequence is TSTLTSSHTSDNEKPASLSSS. N-linked (GlcNAc...) asparagine glycosylation is present at N831. Low complexity-rich tracts occupy residues 844-910 and 922-941; these read SASS…SSSS and SSSV…ESSS. Positions 844-963 are disordered; it reads SASSSYHSSE…ANENTSEITT (120 aa). The segment covering 942–963 has biased composition (polar residues); the sequence is NGLVSTVTESSTANENTSEITT. Residues N957, N966, and N1070 are each glycosylated (N-linked (GlcNAc...) asparagine). N1089 carries GPI-anchor amidated asparagine lipidation. A propeptide spans 1090-1114 (removed in mature form); sequence ANSLGLKNGDNSWIIGIMMIGLLMI.

The protein resides in the cell membrane. Putative adhesin which may be involved in cell adhesion and virulence. Involved in the regulation of filamentous growth. The protein is Filamentous growth regulator 23 (FGR23) of Candida albicans (strain SC5314 / ATCC MYA-2876) (Yeast).